A 197-amino-acid chain; its full sequence is Probable GTP-binding protein EngB (197 aa).

The EngB-type G domain occupies 25 to 197; the sequence is SAPEIAFAGR…VRDEFFKFTR (173 aa). Residues 33–40, 60–64, 79–82, 146–149, and 177–179 each bind GTP; these read GRSNVGKS, GCTRQ, DLPG, TKID, and ISV. Residues serine 40 and threonine 62 each contribute to the Mg(2+) site.

It belongs to the TRAFAC class TrmE-Era-EngA-EngB-Septin-like GTPase superfamily. EngB GTPase family. Mg(2+) is required as a cofactor.

Functionally, necessary for normal cell division and for the maintenance of normal septation. This chain is Probable GTP-binding protein EngB, found in Wolbachia sp. subsp. Brugia malayi (strain TRS).